A 34-amino-acid chain; its full sequence is MSDIN-like toxin proprotein 4 (34 aa).

Residues methionine 1–proline 10 constitute a propeptide that is removed on maturation. The segment at residues leucine 11 to proline 20 is a cross-link (cyclopeptide (Leu-Pro)). Positions cysteine 21 to glutamate 34 are excised as a propeptide.

It belongs to the MSDIN fungal toxin family. Processed by the macrocyclase-peptidase enzyme POPB to yield a toxic cyclic decapeptide. POPB first removes 10 residues from the N-terminus. Conformational trapping of the remaining peptide forces the enzyme to release this intermediate rather than proceed to macrocyclization. The enzyme rebinds the remaining peptide in a different conformation and catalyzes macrocyclization of the N-terminal 10 residues.

Probable toxin that belongs to the MSDIN-like toxin family responsible for a large number of food poisoning cases and deaths. In Amanita bisporigera (Destroying angel), this protein is MSDIN-like toxin proprotein 4.